We begin with the raw amino-acid sequence, 144 residues long: Mediator of RNA polymerase II transcription subunit 21 (144 aa).

The protein belongs to the Mediator complex subunit 21 family. In terms of assembly, component of the Mediator complex, which is composed of MED1, MED4, MED6, MED7, MED8, MED9, MED10, MED11, MED12, MED13, MED13L, MED14, MED15, MED16, MED17, MED18, MED19, MED20, MED21, MED22, MED23, MED24, MED25, MED26, MED27, MED29, MED30, MED31, CCNC, CDK8 and CDC2L6/CDK11. The MED12, MED13, CCNC and CDK8 subunits form a distinct module termed the CDK8 module. Mediator containing the CDK8 module is less active than Mediator lacking this module in supporting transcriptional activation. Individual preparations of the Mediator complex lacking one or more distinct subunits have been variously termed ARC, CRSP, DRIP, PC2, SMCC and TRAP. Interacts with PPARG. Interacts with THRA in a ligand-dependent fashion.

Its subcellular location is the nucleus. Functionally, component of the Mediator complex, a coactivator involved in the regulated transcription of nearly all RNA polymerase II-dependent genes. Mediator functions as a bridge to convey information from gene-specific regulatory proteins to the basal RNA polymerase II transcription machinery. Mediator is recruited to promoters by direct interactions with regulatory proteins and serves as a scaffold for the assembly of a functional preinitiation complex with RNA polymerase II and the general transcription factors. In Pongo abelii (Sumatran orangutan), this protein is Mediator of RNA polymerase II transcription subunit 21 (MED21).